The chain runs to 111 residues: BET1-like protein (111 aa).

Residues 1 to 86 (MADWARAQSP…MARSGRDNRK (86 aa)) lie on the Cytoplasmic side of the membrane. Residues S9 and S37 each carry the phosphoserine modification. Residues 15-77 (EILDRENKRM…TGSVKRFSTM (63 aa)) form the t-SNARE coiled-coil homology domain. The chain crosses the membrane as a helical; Anchor for type IV membrane protein span at residues 87 to 107 (LLCGMAVGLIVAFFILSYFLS). Residues 108–111 (RART) lie on the Lumenal side of the membrane.

Component of a SNARE complex consisting of STX5, YKT6, GOSR1 and BET1L. Interacts with STX5.

The protein resides in the golgi apparatus membrane. It localises to the golgi apparatus. It is found in the trans-Golgi network membrane. In terms of biological role, vesicle SNARE required for targeting and fusion of retrograde transport vesicles with the Golgi complex. Required for the integrity of the Golgi complex. The chain is BET1-like protein from Pongo abelii (Sumatran orangutan).